Consider the following 151-residue polypeptide: UPF0178 protein Spea_2958 (151 aa).

Belongs to the UPF0178 family.

The sequence is that of UPF0178 protein Spea_2958 from Shewanella pealeana (strain ATCC 700345 / ANG-SQ1).